A 171-amino-acid chain; its full sequence is NADH-quinone oxidoreductase subunit I (171 aa).

4Fe-4S ferredoxin-type domains follow at residues 63 to 92 (RRYE…IESD) and 102 to 131 (TRYD…ETQI). [4Fe-4S] cluster-binding residues include C72, C75, C78, C82, C111, C114, C117, and C121.

The protein belongs to the complex I 23 kDa subunit family. In terms of assembly, NDH-1 is composed of 14 different subunits. Subunits NuoA, H, J, K, L, M, N constitute the membrane sector of the complex. The cofactor is [4Fe-4S] cluster.

It localises to the cell inner membrane. It carries out the reaction a quinone + NADH + 5 H(+)(in) = a quinol + NAD(+) + 4 H(+)(out). In terms of biological role, NDH-1 shuttles electrons from NADH, via FMN and iron-sulfur (Fe-S) centers, to quinones in the respiratory chain. The immediate electron acceptor for the enzyme in this species is believed to be ubiquinone. Couples the redox reaction to proton translocation (for every two electrons transferred, four hydrogen ions are translocated across the cytoplasmic membrane), and thus conserves the redox energy in a proton gradient. In Paracidovorax citrulli (strain AAC00-1) (Acidovorax citrulli), this protein is NADH-quinone oxidoreductase subunit I.